The primary structure comprises 222 residues: Flagellar L-ring protein (222 aa).

The N-terminal stretch at 1-18 (MKTTRAIAMLGLLLGLAA) is a signal peptide. The N-palmitoyl cysteine moiety is linked to residue cysteine 19. Cysteine 19 carries the S-diacylglycerol cysteine lipid modification.

This sequence belongs to the FlgH family. In terms of assembly, the basal body constitutes a major portion of the flagellar organelle and consists of four rings (L,P,S, and M) mounted on a central rod.

It localises to the cell outer membrane. The protein localises to the bacterial flagellum basal body. Its function is as follows. Assembles around the rod to form the L-ring and probably protects the motor/basal body from shearing forces during rotation. The sequence is that of Flagellar L-ring protein from Thiobacillus denitrificans (strain ATCC 25259 / T1).